A 676-amino-acid polypeptide reads, in one-letter code: Methionine--tRNA ligase (676 aa).

The 'HIGH' region signature appears at 15–25 (PYANGPIHLGH). The Zn(2+) site is built by Cys146, Cys149, Cys159, and Cys162. A 'KMSKS' region motif is present at residues 332–336 (KMSKS). Lys335 contacts ATP. The tRNA-binding domain occupies 575–676 (DFAKIDLRIA…EGAQPGMRVK (102 aa)).

This sequence belongs to the class-I aminoacyl-tRNA synthetase family. MetG type 1 subfamily. Homodimer. Requires Zn(2+) as cofactor.

The protein localises to the cytoplasm. It catalyses the reaction tRNA(Met) + L-methionine + ATP = L-methionyl-tRNA(Met) + AMP + diphosphate. Its function is as follows. Is required not only for elongation of protein synthesis but also for the initiation of all mRNA translation through initiator tRNA(fMet) aminoacylation. The sequence is that of Methionine--tRNA ligase from Shewanella sp. (strain MR-7).